A 380-amino-acid chain; its full sequence is Cytochrome b (380 aa).

Helical transmembrane passes span 33 to 53, 77 to 98, 113 to 133, and 178 to 198; these read FGSLLGLCLISQILTGLFLAM, WLIRNLHANGASFFFICIYLHI, WNIGVVLLLLVMATAFVGYVL, and FFAFHFLLPFIVAAMTMLHLL. Heme b-binding residues include His-83 and His-97. The heme b site is built by His-182 and His-196. His-201 contacts a ubiquinone. 4 helical membrane-spanning segments follow: residues 226 to 246, 288 to 308, 320 to 340, and 347 to 367; these read YKDLLGFAAVIILLTCLALFT, LGGVLALLASILVLMVVPILH, VTQFLFWALIANVAILTWIGG, and YIIIGQIASLTYFALFLLIMP.

This sequence belongs to the cytochrome b family. In terms of assembly, the cytochrome bc1 complex contains 3 respiratory subunits (MT-CYB, CYC1 and UQCRFS1), 2 core proteins (UQCRC1 and UQCRC2) and probably 6 low-molecular weight proteins. Heme b serves as cofactor.

The protein localises to the mitochondrion inner membrane. In terms of biological role, component of the ubiquinol-cytochrome c reductase complex (complex III or cytochrome b-c1 complex) that is part of the mitochondrial respiratory chain. The b-c1 complex mediates electron transfer from ubiquinol to cytochrome c. Contributes to the generation of a proton gradient across the mitochondrial membrane that is then used for ATP synthesis. This Pagrus major (Red sea bream) protein is Cytochrome b (mt-cyb).